Here is a 1082-residue protein sequence, read N- to C-terminus: Carbamoyl phosphate synthase large chain (1082 aa).

A carboxyphosphate synthetic domain region spans residues 1–401 (MPKDKALKKV…ALLKAVRSLE (401 aa)). 12 residues coordinate ATP: arginine 129, arginine 169, glycine 175, glycine 176, lysine 208, valine 210, glutamate 215, glycine 241, isoleucine 242, histidine 243, glutamine 284, and glutamate 298. An ATP-grasp 1 domain is found at 133-327 (KNMCLEIGEP…IAKVATKVAV (195 aa)). Mg(2+)-binding residues include glutamine 284, glutamate 298, and asparagine 300. Mn(2+) is bound by residues glutamine 284, glutamate 298, and asparagine 300. The tract at residues 402–561 (TGVTGMNLPE…YSTYEDEDEA (160 aa)) is oligomerization domain. The interval 562-944 (EPQAVRKVVV…ALYKACLSAG (383 aa)) is carbamoyl phosphate synthetic domain. One can recognise an ATP-grasp 2 domain in the interval 686–876 (DQLVAELGIP…MVNLATRICL (191 aa)). ATP-binding residues include arginine 722, lysine 761, leucine 763, glutamate 767, glycine 792, isoleucine 793, histidine 794, serine 795, glutamine 835, and glutamate 847. Residues glutamine 835, glutamate 847, and asparagine 849 each coordinate Mg(2+). Glutamine 835, glutamate 847, and asparagine 849 together coordinate Mn(2+). Positions 945-1082 (YTLPSSGKAV…PLIPLQEYVS (138 aa)) constitute an MGS-like domain. Residues 945 to 1082 (YTLPSSGKAV…PLIPLQEYVS (138 aa)) are allosteric domain.

This sequence belongs to the CarB family. In terms of assembly, composed of two chains; the small (or glutamine) chain promotes the hydrolysis of glutamine to ammonia, which is used by the large (or ammonia) chain to synthesize carbamoyl phosphate. Tetramer of heterodimers (alpha,beta)4. Mg(2+) is required as a cofactor. Requires Mn(2+) as cofactor.

The enzyme catalyses hydrogencarbonate + L-glutamine + 2 ATP + H2O = carbamoyl phosphate + L-glutamate + 2 ADP + phosphate + 2 H(+). It catalyses the reaction hydrogencarbonate + NH4(+) + 2 ATP = carbamoyl phosphate + 2 ADP + phosphate + 2 H(+). The protein operates within amino-acid biosynthesis; L-arginine biosynthesis; carbamoyl phosphate from bicarbonate: step 1/1. It functions in the pathway pyrimidine metabolism; UMP biosynthesis via de novo pathway; (S)-dihydroorotate from bicarbonate: step 1/3. In terms of biological role, large subunit of the glutamine-dependent carbamoyl phosphate synthetase (CPSase). CPSase catalyzes the formation of carbamoyl phosphate from the ammonia moiety of glutamine, carbonate, and phosphate donated by ATP, constituting the first step of 2 biosynthetic pathways, one leading to arginine and/or urea and the other to pyrimidine nucleotides. The large subunit (synthetase) binds the substrates ammonia (free or transferred from glutamine from the small subunit), hydrogencarbonate and ATP and carries out an ATP-coupled ligase reaction, activating hydrogencarbonate by forming carboxy phosphate which reacts with ammonia to form carbamoyl phosphate. The protein is Carbamoyl phosphate synthase large chain of Desulforudis audaxviator (strain MP104C).